The following is a 289-amino-acid chain: 18S rRNA (guanine-N(7))-methyltransferase RID2 (289 aa).

The disordered stretch occupies residues 215–289; the sequence is KNEYDESCSE…FTSRKRRTRF (75 aa). Acidic residues predominate over residues 219 to 237; it reads DESCSEDDNSDDEESEEVG. Positions 243–254 are enriched in basic residues; it reads RPRKRQRTNTKV. The span at 255-264 shows a compositional bias: basic and acidic residues; it reads KGREWVLRKK. The short motif at 268 to 275 is the Nuclear localization signal element; the sequence is RRKGKNVP.

This sequence belongs to the class I-like SAM-binding methyltransferase superfamily. BUD23/WBSCR22 family. Expressed in seedlings, roots and flowers.

It localises to the nucleus. It is found in the nucleoplasm. Its subcellular location is the cytoplasm. The protein resides in the perinuclear region. The protein localises to the nucleolus. The catalysed reaction is guanosine(1575) in yeast 18S rRNA + S-adenosyl-L-methionine = N(7)-methylguanosine(1575) in yeast 18S rRNA + S-adenosyl-L-homocysteine. In terms of biological role, essential protein. S-adenosyl-L-methionine-dependent methyltransferase that specifically methylates the N(7) position of a guanine in 18S rRNA. Requires the methyltransferase adapter protein TRM112 for full rRNA methyltransferase activity. Important for biogenesis end export of the 40S ribosomal subunit independent on its methyltransferase activity. Involved in the pre-rRNA processing steps in the nucleolus leading to small-subunit rRNA production independently of its RNA-modifying catalytic activity. Supports cell proliferation. Required for the initiation of lateral root primordia formation and for the root apical meristem (RAM) organization as well as for leaves development. During callus formation from hypocotyl and root explants, required for the initial stage of reactivation of cell proliferation in the hypocotyl stele. Involved in leaf polarity establishment by functioning cooperatively with AS2 to repress abaxial genes ARF3, ARF4, KAN1, KAN2, YAB1 and YAB5, and the knox homeobox genes KNAT1, KNAT2, KNAT6, and STM to promote adaxial development in leaf primordia at shoot apical meristems at high temperatures. This chain is 18S rRNA (guanine-N(7))-methyltransferase RID2, found in Arabidopsis thaliana (Mouse-ear cress).